The chain runs to 325 residues: Gamma-hemolysin component B (325 aa).

The first 26 residues, 1 to 26, serve as a signal peptide directing secretion; that stretch reads MKMNKLVKSSVATSMALLLLSGTANA.

This sequence belongs to the aerolysin family. Toxicity requires sequential binding and synergistic association of a class S and a class F component which form heterooligomeric complexes. HlgB (class F) associates with either hlgA thus forming an AB toxin or with hlgC thus forming a CB toxin. Interacts with host AMFR.

It is found in the secreted. Its function is as follows. Toxin that seems to act by forming pores in the membrane of the cell. Has a hemolytic and a leucotoxic activity. Promotes host AMFR-mediated inflammation by mediating 'Lys-27'-linked ubiquitination of TAB3, TAK1-TAB3 complex formation and phosphorylation of TAK1/MAP3K7. In turn, activates host NF-kappa-B signaling pathway. In Staphylococcus aureus (strain NCTC 8325 / PS 47), this protein is Gamma-hemolysin component B (hlgB).